A 1643-amino-acid chain; its full sequence is MSSTLHSVFFTLKVSILLGSLLGLCLGLEFMGLPNQWARYLRWDASTRSDLSFQFKTNVSTGLLLYLDDGGVCDFLCLSLVDGRVQLRFSMDCAETAVLSNKQVNDSSWHFLMVSRDRLRTVLMLDGEGQSGELQPQRPYMDVVSDLFLGGVPTDIRPSALTLDGVQAMPGFKGLILDLKYGNSEPRLLGSRGVQMDAEGPCGERPCENGGICFLLDGHPTCDCSTTGYGGKLCSEDVSQDPGLSHLMMSEQAREENVATFRGSEYLCYDLSQNPIQSSSDEITLSFKTWQRNGLILHTGKSADYVNLALKDGAVSLVINLGSGAFEAIVEPVNGKFNDNAWHDVKVTRNLRQVTISVDGILTTTGYTQEDYTMLGSDDFFYVGGSPSTADLPGSPVSNNFMGCLKEVVYKNNDIRLELSRLARIADTKMKIYGEVVFKCENVATLDPINFETPEAYISLPKWNTKRMGSISFDFRTTEPNGLILFTHGKPQERKDARSQKNTKVDFFAVELLDGNLYLLLDMGSGTIKVKATQKKANDGEWYHVDIQRDGRSGTISVNSRRTPFTASGESEILDLEGDMYLGGLPENRAGLILPTELWTAMLNYGYVGCIRDLFIDGRSKNIRQLAEMQNAAGVKSSCSRMSAKQCDSYPCKNNAVCKDGWNRFICDCTGTGYWGRTCEREASILSYDGSMYMKIIMPMVMHTEAEDVSFRFMSQRAYGLLVATTSRDSADTLRLELDGGRVKLMVNLDCIRINCNSSKGPETLYAGQKLNDNEWHTVRVVRRGKSLKLTVDDDVAEGTMVGDHTRLEFHNIETGIMTEKRYISVVPSSFIGHLQSLMFNGLLYIDLCKNGDIDYCELKARFGLRNIIADPVTFKTKSSYLSLATLQAYTSMHLFFQFKTTSPDGFILFNSGDGNDFIAVELVKGYIHYVFDLGNGPNVIKGNSDRPLNDNQWHNVVITRDNSNTHSLKVDTKVVTQVINGAKNLDLKGDLYMAGLAQGMYSNLPKLVASRDGFQGCLASVDLNGRLPDLINDALHRSGQIERGCEGPSTTCQEDSCANQGVCMQQWEGFTCDCSMTSYSGNQCNDPGATYIFGKSGGLILYTWPANDRPSTRSDRLAVGFSTTVKDGILVRIDSAPGLGDFLQLHIEQGKIGVVFNIGTVDISIKEERTPVNDGKYHVVRFTRNGGNATLQVDNWPVNEHYPTGRQLTIFNTQAQIAIGGKDKGRLFQGQLSGLYYDGLKVLNMAAENNPNIKINGSVRLVGEVPSILGTTQTTSMPPEMSTTVMETTTTMATTTTRKNRSTASIQPTSDDLVSSAECSSDDEDFVECEPSTTGGELVIPLLVEDPLATPPIATRAPSITLPPTFRPLLTIIETTKDSLSMTSEAGLPCLSDQGSDGCDDDGLVISGYGSGETFDSNLPPTDDEDFYTTFSLVTDKSLSTSIFEGGYKAHAPKWESKDFRPNKVSETSRTTTTSLSPELIRFTASSSSGMVPKLPAGKMNNRDLKPQPDIVLLPLPTAYELDSTKLKSPLITSPMFRNVPTANPTEPGIRRVPGASEVIRESSSTTGMVVGIVAAAALCILILLYAMYKYRNRDEGSYQVDETRNYISNSAQSNGTLMKEKQQSSKSGHKKQKNKDREYYV.

The first 27 residues, 1–27, serve as a signal peptide directing secretion; it reads MSSTLHSVFFTLKVSILLGSLLGLCLG. Residues 28–202 form the Laminin G-like 1 domain; that stretch reads LEFMGLPNQW…GVQMDAEGPC (175 aa). Residues 28-1568 are Extracellular-facing; the sequence is LEFMGLPNQW…EVIRESSSTT (1541 aa). Residues asparagine 58 and asparagine 105 are each glycosylated (N-linked (GlcNAc...) asparagine). Residues 198–235 enclose the EGF-like 1 domain; that stretch reads AEGPCGERPCENGGICFLLDGHPTCDCSTTGYGGKLCS. Intrachain disulfides connect cysteine 202-cysteine 213, cysteine 207-cysteine 222, and cysteine 224-cysteine 234. Laminin G-like domains are found at residues 258 to 440 and 447 to 639; these read VATF…VFKC and DPIN…KSSC. The Ca(2+) site is built by aspartate 304, leucine 321, and methionine 374. Intrachain disulfides connect cysteine 404-cysteine 440, cysteine 610-cysteine 639, cysteine 647-cysteine 658, cysteine 652-cysteine 667, and cysteine 669-cysteine 679. Residues 643–680 enclose the EGF-like 2 domain; that stretch reads SAKQCDSYPCKNNAVCKDGWNRFICDCTGTGYWGRTCE. Laminin G-like domains follow at residues 685–857 and 871–1046; these read ILSY…IDYC and DPVT…ERGC. Ca(2+) is bound by residues aspartate 732 and leucine 749. Residue asparagine 757 is glycosylated (N-linked (GlcNAc...) asparagine). Arginine 807 is a binding site for Ca(2+). 4 disulfide bridges follow: cysteine 1018/cysteine 1046, cysteine 1053/cysteine 1064, cysteine 1058/cysteine 1073, and cysteine 1075/cysteine 1085. Positions 1049 to 1086 constitute an EGF-like 3 domain; that stretch reads PSTTCQEDSCANQGVCMQQWEGFTCDCSMTSYSGNQCN. The Laminin G-like 6 domain occupies 1090–1260; it reads ATYIFGKSGG…NPNIKINGSV (171 aa). The Ca(2+) site is built by aspartate 1142 and isoleucine 1159. An N-linked (GlcNAc...) asparagine glycan is attached at asparagine 1189. The Ca(2+) site is built by isoleucine 1211 and asparagine 1213. N-linked (GlcNAc...) asparagine glycans are attached at residues asparagine 1257 and asparagine 1301. The segment at 1294–1318 is disordered; that stretch reads ATTTTRKNRSTASIQPTSDDLVSSA. Positions 1303–1318 are enriched in polar residues; that stretch reads STASIQPTSDDLVSSA. Serine 1317 carries an O-linked (Xyl...) (heparan sulfate) serine glycan. The chain crosses the membrane as a helical span at residues 1569 to 1589; the sequence is GMVVGIVAAAALCILILLYAM. The Cytoplasmic segment spans residues 1590-1643; sequence YKYRNRDEGSYQVDETRNYISNSAQSNGTLMKEKQQSSKSGHKKQKNKDREYYV. The tract at residues 1611–1643 is disordered; the sequence is NSAQSNGTLMKEKQQSSKSGHKKQKNKDREYYV.

Belongs to the neurexin family. As to quaternary structure, the laminin G-like domain 2 binds to NXPH1. Specific isoforms bind to alpha-dystroglycan. The cytoplasmic C-terminal region binds to CASK. Specific isoforms bind neuroligins NLGN1, NLGN2 and NLGN3. Interacts with CLSTN3. Post-translationally, O-glycosylated; contains heparan sulfate. Heparan sulfate attachment is required for synapse development by mediating interactions with neuroligins. In terms of tissue distribution, expressed in the blood vessel walls (at protein level). Highly expressed in brain, lung, and pancreas; a lower level of expression is detectable in heart, placenta, liver, and kidney, whereas no expression can be observed in skeletal muscle. Isoform 4a is heart-specific.

It is found in the presynaptic cell membrane. Its function is as follows. Neuronal cell surface protein that may be involved in cell recognition and cell adhesion. May mediate intracellular signaling. This is Neurexin-3 (NRXN3) from Homo sapiens (Human).